A 231-amino-acid polypeptide reads, in one-letter code: 2-C-methyl-D-erythritol 4-phosphate cytidylyltransferase (231 aa).

Belongs to the IspD/TarI cytidylyltransferase family. IspD subfamily.

The catalysed reaction is 2-C-methyl-D-erythritol 4-phosphate + CTP + H(+) = 4-CDP-2-C-methyl-D-erythritol + diphosphate. It functions in the pathway isoprenoid biosynthesis; isopentenyl diphosphate biosynthesis via DXP pathway; isopentenyl diphosphate from 1-deoxy-D-xylulose 5-phosphate: step 2/6. Its function is as follows. Catalyzes the formation of 4-diphosphocytidyl-2-C-methyl-D-erythritol from CTP and 2-C-methyl-D-erythritol 4-phosphate (MEP). The chain is 2-C-methyl-D-erythritol 4-phosphate cytidylyltransferase from Clostridium kluyveri (strain NBRC 12016).